Here is a 510-residue protein sequence, read N- to C-terminus: 2,3-bisphosphoglycerate-independent phosphoglycerate mutase (510 aa).

Residues D13 and S63 each contribute to the Mn(2+) site. The active-site Phosphoserine intermediate is the S63. Substrate-binding positions include H124, 154-155 (RD), R186, R192, 262-265 (RADR), and K334. Positions 401, 405, 442, 443, and 461 each coordinate Mn(2+).

This sequence belongs to the BPG-independent phosphoglycerate mutase family. Monomer. Mn(2+) is required as a cofactor.

The catalysed reaction is (2R)-2-phosphoglycerate = (2R)-3-phosphoglycerate. It functions in the pathway carbohydrate degradation; glycolysis; pyruvate from D-glyceraldehyde 3-phosphate: step 3/5. Catalyzes the interconversion of 2-phosphoglycerate and 3-phosphoglycerate. The chain is 2,3-bisphosphoglycerate-independent phosphoglycerate mutase from Vibrio cholerae serotype O1 (strain ATCC 39541 / Classical Ogawa 395 / O395).